Consider the following 1504-residue polypeptide: DNA-directed RNA polymerase subunit beta' (1504 aa).

Positions 60, 62, 75, and 78 each coordinate Zn(2+). The segment at 265–294 is disordered; sequence RKQRDLEDAEQLTGAERERKEYEASQERER. The span at 279–294 shows a compositional bias: basic and acidic residues; it reads AERERKEYEASQERER. Positions 626, 628, and 630 each coordinate Mg(2+). 4 residues coordinate Zn(2+): Cys1002, Cys1075, Cys1082, and Cys1085. The tract at residues 1468–1504 is disordered; the sequence is RALIGGDGDDGERNNGDFDDQVGEDVVIPPDDDDQEA.

This sequence belongs to the RNA polymerase beta' chain family. As to quaternary structure, the RNAP catalytic core consists of 2 alpha, 1 beta, 1 beta' and 1 omega subunit. When a sigma factor is associated with the core the holoenzyme is formed, which can initiate transcription. Mg(2+) is required as a cofactor. Requires Zn(2+) as cofactor.

It carries out the reaction RNA(n) + a ribonucleoside 5'-triphosphate = RNA(n+1) + diphosphate. In terms of biological role, DNA-dependent RNA polymerase catalyzes the transcription of DNA into RNA using the four ribonucleoside triphosphates as substrates. This chain is DNA-directed RNA polymerase subunit beta', found in Roseiflexus sp. (strain RS-1).